The sequence spans 534 residues: CTP synthase (534 aa).

Residues 1–266 are amidoligase domain; that stretch reads MKTKFIFVTG…DEQVVEKLNI (266 aa). S14 is a CTP binding site. Position 14 (S14) interacts with UTP. Residues 15 to 20 and D72 contribute to the ATP site; that span reads SIGKGL. D72 and E140 together coordinate Mg(2+). Residues 147–149, 187–192, and K223 each bind CTP; these read DIE and KTKPTQ. UTP contacts are provided by residues 187 to 192 and K223; that span reads KTKPTQ. Residues 292 to 534 form the Glutamine amidotransferase type-1 domain; sequence RIAIVGKYVN…IAAALHNIKA (243 aa). Residue G354 participates in L-glutamine binding. C381 (nucleophile; for glutamine hydrolysis) is an active-site residue. L-glutamine is bound by residues 382–385, E405, and R462; that span reads LGMQ. Residues H507 and E509 contribute to the active site.

It belongs to the CTP synthase family. Homotetramer.

It catalyses the reaction UTP + L-glutamine + ATP + H2O = CTP + L-glutamate + ADP + phosphate + 2 H(+). The catalysed reaction is L-glutamine + H2O = L-glutamate + NH4(+). The enzyme catalyses UTP + NH4(+) + ATP = CTP + ADP + phosphate + 2 H(+). The protein operates within pyrimidine metabolism; CTP biosynthesis via de novo pathway; CTP from UDP: step 2/2. With respect to regulation, allosterically activated by GTP, when glutamine is the substrate; GTP has no effect on the reaction when ammonia is the substrate. The allosteric effector GTP functions by stabilizing the protein conformation that binds the tetrahedral intermediate(s) formed during glutamine hydrolysis. Inhibited by the product CTP, via allosteric rather than competitive inhibition. Catalyzes the ATP-dependent amination of UTP to CTP with either L-glutamine or ammonia as the source of nitrogen. Regulates intracellular CTP levels through interactions with the four ribonucleotide triphosphates. This is CTP synthase from Geotalea uraniireducens (strain Rf4) (Geobacter uraniireducens).